Here is a 968-residue protein sequence, read N- to C-terminus: RNA polymerase-associated protein RapA (968 aa).

One can recognise a Helicase ATP-binding domain in the interval 164 to 334 (EVGQRHAPRV…FARLRLLDPD (171 aa)). 177–184 (DEVGLGKT) lines the ATP pocket. The DEAH box signature appears at 280–283 (DEAH). One can recognise a Helicase C-terminal domain in the interval 490-664 (RVEWLLNYLI…ATPSEQEGLD (175 aa)).

The protein belongs to the SNF2/RAD54 helicase family. RapA subfamily. In terms of assembly, interacts with the RNAP. Has a higher affinity for the core RNAP than for the holoenzyme. Its ATPase activity is stimulated by binding to RNAP.

In terms of biological role, transcription regulator that activates transcription by stimulating RNA polymerase (RNAP) recycling in case of stress conditions such as supercoiled DNA or high salt concentrations. Probably acts by releasing the RNAP, when it is trapped or immobilized on tightly supercoiled DNA. Does not activate transcription on linear DNA. Probably not involved in DNA repair. This chain is RNA polymerase-associated protein RapA, found in Yersinia enterocolitica serotype O:8 / biotype 1B (strain NCTC 13174 / 8081).